Reading from the N-terminus, the 185-residue chain is Pyruvate/ketoisovalerate oxidoreductases common subunit gamma (185 aa).

Heterotetramer of one alpha, one beta, one delta and one gamma chain.

It catalyses the reaction 2 oxidized [2Fe-2S]-[ferredoxin] + pyruvate + CoA = 2 reduced [2Fe-2S]-[ferredoxin] + acetyl-CoA + CO2 + H(+). It carries out the reaction 3-methyl-2-oxobutanoate + 2 oxidized [2Fe-2S]-[ferredoxin] + CoA = 2-methylpropanoyl-CoA + 2 reduced [2Fe-2S]-[ferredoxin] + CO2 + H(+). The sequence is that of Pyruvate/ketoisovalerate oxidoreductases common subunit gamma (porG) from Thermococcus litoralis (strain ATCC 51850 / DSM 5473 / JCM 8560 / NS-C).